Here is a 1152-residue protein sequence, read N- to C-terminus: DNA-directed RNA polymerase subunit beta' (1152 aa).

4 residues coordinate Zn(2+): cysteine 60, cysteine 62, cysteine 75, and cysteine 78. Residues aspartate 449, aspartate 451, and aspartate 453 each coordinate Mg(2+). Residues cysteine 779, cysteine 853, cysteine 860, and cysteine 863 each contribute to the Zn(2+) site.

It belongs to the RNA polymerase beta' chain family. In terms of assembly, the RNAP catalytic core consists of 2 alpha, 1 beta, 1 beta' and 1 omega subunit. When a sigma factor is associated with the core the holoenzyme is formed, which can initiate transcription. The cofactor is Mg(2+). Zn(2+) serves as cofactor.

It catalyses the reaction RNA(n) + a ribonucleoside 5'-triphosphate = RNA(n+1) + diphosphate. Its function is as follows. DNA-dependent RNA polymerase catalyzes the transcription of DNA into RNA using the four ribonucleoside triphosphates as substrates. The protein is DNA-directed RNA polymerase subunit beta' of Carboxydothermus hydrogenoformans (strain ATCC BAA-161 / DSM 6008 / Z-2901).